A 531-amino-acid polypeptide reads, in one-letter code: MESQLWNWILPLLISSLLISFVAFYGFFVKPKRNGLRHDRKTVSTVTSDVGSVNITGDTVADVIVVGAGVAGSALAYTLGKDKRRVHVIERDLSEPDRIVGELLQPGGYLKLLELGIEDCVEEIDAQRVYGYALFKNGKRIRLAYPLEKFHEDVSGRSFHNGRFIQRMREKAASLPNVQLEQGTVLSLLEENGTIKGVRYKNKAGEEQTAFAALTIVCDGCFSNLRRSLCNPQVEVPSCFVGLVLENCNLPYANHGHVVLADPSPILMYPISSTEVRCLVDVPGQKVPSIANGEMKNYLKTVVAPQMPHEVYDSFIAAVDKGNIKSMPNRSMPASPYPTPGALLMGDAFNMRHPLTGGGMTVALADIVVLRNLLRPLRDLSDGASLCKYLESFYTLRKPVAATINTLANALYQVFCSSENEARNEMREACFDYLGLGGMCTSGPVSLLSGLNPRPLTLVCHFFAVAVYGVIRLLIPFPSPKRIWLGAKLISGASGIIFPIIKAEGVRQMFFPATVPAYYYKAPTVGETKCS.

Residues 9-29 (ILPLLISSLLISFVAFYGFFV) form a helical membrane-spanning segment. FAD-binding positions include 70–71 (VA), 90–91 (ER), arginine 98, arginine 169, valine 185, aspartate 347, and methionine 360. The next 2 helical transmembrane spans lie at 458–478 (LVCH…IPFP) and 483–503 (IWLG…IIKA).

The protein belongs to the squalene monooxygenase family. It depends on FAD as a cofactor. In terms of tissue distribution, expressed in seedlings, leaves, stems, inflorescences, sepals, style and siliques. Expressed in expanded cotyledons, root tips and cortical cells of the root elongation zone, but not in root hair cells. In leaves, expressed in most cells, with a very strong expression in stomata.

It localises to the membrane. It catalyses the reaction squalene + reduced [NADPH--hemoprotein reductase] + O2 = (S)-2,3-epoxysqualene + oxidized [NADPH--hemoprotein reductase] + H2O + H(+). It participates in terpene metabolism; lanosterol biosynthesis; lanosterol from farnesyl diphosphate: step 2/3. Catalyzes the stereospecific oxidation of squalene to (S)-2,3-epoxysqualene, and is considered to be a rate-limiting enzyme in steroid biosynthesis. Can produce not only oxidosqualene, but also 2,3:22,23-dioxidosqualene. Main squalene epoxidase in the root. Sqe1 mutants may show defects in membrane lipid rafts, impairing the correct localization of RHD2 NADPH oxidase and the proper polarized production of ROS. This Arabidopsis thaliana (Mouse-ear cress) protein is Squalene epoxidase 1 (SQE1).